The chain runs to 687 residues: Polyphosphate kinase (687 aa).

N45 contacts ATP. Positions 375 and 405 each coordinate Mg(2+). H435 functions as the Phosphohistidine intermediate in the catalytic mechanism. ATP is bound by residues Y472, R568, and H596.

It belongs to the polyphosphate kinase 1 (PPK1) family. The cofactor is Mg(2+). In terms of processing, an intermediate of this reaction is the autophosphorylated ppk in which a phosphate is covalently linked to a histidine residue through a N-P bond.

The enzyme catalyses [phosphate](n) + ATP = [phosphate](n+1) + ADP. Catalyzes the reversible transfer of the terminal phosphate of ATP to form a long-chain polyphosphate (polyP). The polypeptide is Polyphosphate kinase (Burkholderia ambifaria (strain MC40-6)).